Here is a 130-residue protein sequence, read N- to C-terminus: Snaclec B8 (130 aa).

3 cysteine pairs are disulfide-bonded: cysteine 2–cysteine 13, cysteine 30–cysteine 124, and cysteine 99–cysteine 116. The region spanning 9-125 is the C-type lectin domain; the sequence is HEGHCYKVFK…CELAYHFICM (117 aa).

The protein belongs to the snaclec family. Heterodimer; disulfide-linked. As to expression, expressed by the venom gland.

Its subcellular location is the secreted. In terms of biological role, interferes with one step of hemostasis (modulation of platelet aggregation, or coagulation cascade, for example). The chain is Snaclec B8 from Macrovipera lebetinus (Levantine viper).